Here is a 414-residue protein sequence, read N- to C-terminus: Protein IQ-DOMAIN 8 (414 aa).

The short motif at N14 to D21 is the Nuclear localization signal 1 element. A disordered region spans residues L40–S61. 3 IQ domains span residues R92–R120, I121–A143, and L144–S169. Residues V119 to K132 form a calmodulin-binding region. 3 disordered regions span residues N156–S190, H218–S244, and G262–F329. Positions E164–W184 are enriched in basic and acidic residues. The span at K231 to S244 shows a compositional bias: polar residues. Residues N274–Q289 are compositionally biased toward basic and acidic residues. Over residues S307–S328 the composition is skewed to low complexity. A Nuclear localization signal 2 motif is present at residues Y336–S343. A disordered region spans residues S347–P398.

Belongs to the IQD family. In terms of assembly, binds to multiple calmodulin (CaM) in the presence of Ca(2+) and CaM-like proteins.

The protein resides in the nucleus. It localises to the cytoplasm. The protein localises to the cytoskeleton. Its subcellular location is the nucleus envelope. Its function is as follows. May be involved in cooperative interactions with calmodulins or calmodulin-like proteins. Recruits calmodulin proteins to microtubules, thus being a potential scaffold in cellular signaling and trafficking. May associate with nucleic acids and regulate gene expression at the transcriptional or post-transcriptional level. The polypeptide is Protein IQ-DOMAIN 8 (Arabidopsis thaliana (Mouse-ear cress)).